We begin with the raw amino-acid sequence, 226 residues long: Beta-casein (226 aa).

The first 15 residues, 1–15 (MKVLILACLVALALA), serve as a signal peptide directing secretion. The residue at position 18 (Thr18) is a Phosphothreonine; in form 5-P. Ser21 carries the phosphoserine; in form 4-P and form 5-P modification. Ser23 carries the post-translational modification Phosphoserine; in form 3-P, form 4-P and form 5-P. A phosphoserine; in form 1-P, form 2-P, form 3-P, form 4-P and form 5-P mark is found at Ser24 and Ser25.

Belongs to the beta-casein family. Post-translationally, form 1-P is phosphorylated once; half of the molecules are phosphorylated on Ser-24, half on Ser-25. As to expression, mammary gland specific. Secreted in milk.

It localises to the secreted. In terms of biological role, important role in determination of the surface properties of the casein micelles. The sequence is that of Beta-casein (CSN2) from Homo sapiens (Human).